We begin with the raw amino-acid sequence, 344 residues long: Arginine N-succinyltransferase (344 aa).

L125 is a succinyl-CoA binding site. The active-site Proton donor is H229.

This sequence belongs to the arginine N-succinyltransferase family.

The enzyme catalyses succinyl-CoA + L-arginine = N(2)-succinyl-L-arginine + CoA + H(+). It functions in the pathway amino-acid degradation; L-arginine degradation via AST pathway; L-glutamate and succinate from L-arginine: step 1/5. Catalyzes the transfer of succinyl-CoA to arginine to produce N(2)-succinylarginine. The chain is Arginine N-succinyltransferase from Shigella boydii serotype 4 (strain Sb227).